A 1936-amino-acid polypeptide reads, in one-letter code: Trinucleotide repeat-containing gene 6C protein (1936 aa).

Basic and acidic residues predominate over residues 1 to 31 (MEEKKKKKQEEKKKKEGAQKKAADQKTKVPE). Disordered regions lie at residues 1 to 160 (MEEK…PTYR), 181 to 256 (PSIT…NSNG), 366 to 412 (PQES…AMQT), 439 to 931 (NGSS…IRRK), 961 to 1063 (VIQS…VAFG), and 1115 to 1139 (ESTSSCSSWGNAPKKGLQKGMKTSG). The segment covering 34–44 (KTCSSQPQPAG) has biased composition (polar residues). Positions 45 to 57 (TSTSTSTSTISSS) are enriched in low complexity. Polar residues predominate over residues 58–71 (NNGKRASASGQQPA). The span at 76-88 (LPREVPPRFRQQE) shows a compositional bias: basic and acidic residues. Composition is skewed to polar residues over residues 100–111 (PTGTLTSVSPTQ) and 183–217 (ITGTETESASECTTDTDSASNCGSENSSMATGSAQ). A sufficient for interaction with argonaute family proteins region spans residues 211–1133 (MATGSAQGNF…GNAPKKGLQK (923 aa)). Residues 218-235 (GNFTGHTKKTNGNNGTNG) are compositionally biased toward low complexity. Positions 366-393 (PQESTEPQTSTSQNVSFSAQPQNLNTDG) are enriched in polar residues. Composition is skewed to low complexity over residues 394–408 (PNNTNPMNSSPNPIN), 439–453 (NGSSVSQVSGGSAEG), and 469–480 (GNSNSGFSQGNG). The span at 481–498 (DTVNSALSAKQNGSSSAV) shows a compositional bias: polar residues. Arg-523 carries the omega-N-methylarginine modification. Polar residues predominate over residues 572–585 (GWESPSVTSQNPTV). Over residues 594–614 (SWAKAASSGTTASEGSSDGSG) the composition is skewed to low complexity. Over residues 625–636 (GTGEGRRRDKGI) the composition is skewed to basic and acidic residues. Residues 654–669 (LSNTGWGQTPVKQNTA) are compositionally biased toward polar residues. The span at 674 to 684 (ESPRSERKNDN) shows a compositional bias: basic and acidic residues. Residue Ser-675 is modified to Phosphoserine. A compositionally biased stretch (polar residues) spans 694 to 718 (TQASNSGGKNDGSIMNSTNTSSVSG). Composition is skewed to low complexity over residues 720–730 (VNAPPAAVPAN) and 750–772 (SISSTAVSTAAAAKSGHAWSGAA). Polar residues-rich tracts occupy residues 834–866 (NRSGSGWNDTTRSGNSGWGNSTNTKANPGTNWG) and 873–888 (PQQNWASKPQDNNVSN). At Ser-924 the chain carries Phosphoserine. Residues 964 to 982 (SSTTTNTTTTTTTTTSNTT) are compositionally biased toward low complexity. Thr-987 carries the post-translational modification Phosphothreonine. Residues 1021 to 1035 (ENSWGEPSSPSTLVD) show a composition bias toward polar residues. The UBA domain occupies 1140–1185 (KQDEAWIMSRLIKQLTDMGFPREPAEEALKSNNMNLDQAMSALLEK). Ser-1218 is subject to Phosphoserine. Disordered stretches follow at residues 1291–1312 (AAQARTMQQPPQPPVQPLNSSQ), 1419–1658 (VKQP…PSSS), 1689–1732 (STWS…PSST), and 1848–1869 (TSSWQSSSASSQPRLSAAGSSH). The stretch at 1388-1419 (MRQQEQQVARTITNLQQQIQQHQRQLAQALLV) forms a coiled coil. Pro residues predominate over residues 1421–1430 (QPPPPPPPPH). Residues 1467-1936 (NTFAPYPLAG…PGDLLSGESL (470 aa)) are silencing domain; interaction with CNOT1 and PAN3. A compositionally biased stretch (polar residues) spans 1496–1515 (DPSQSQSRLPQWTHPNSMDN). The tract at residues 1578–1624 (KSDSDKISNGSSINWPPEFHPGVPWKGLQNIDPENDPDVTPGSVPTG) is required for interaction with PABPC1. Positions 1578 to 1936 (KSDSDKISNG…PGDLLSGESL (359 aa)) are sufficient for translational repression when tethered to a target mRNA. Residues 1588–1606 (SSINWPPEFHPGVPWKGLQ) are PABPC1-interacting motif-2 (PAM2). Residues 1623–1633 (TGPTINTTIQD) are compositionally biased toward polar residues. Over residues 1641–1658 (SGGSSPPSSQNATLPSSS) the composition is skewed to low complexity. A compositionally biased stretch (polar residues) spans 1689–1703 (STWSSGPTSHTQASL). An RRM domain is found at 1811–1878 (AQKSLHMCVL…HGLVRSDAGH (68 aa)). The interval 1842–1936 (GQALPPTSSW…PGDLLSGESL (95 aa)) is interaction with the CCR4-NOT complex. Residues 1848–1865 (TSSWQSSSASSQPRLSAA) show a composition bias toward low complexity.

Belongs to the GW182 family. In terms of assembly, interacts with one or more of the argonaute family proteins AGO1, AGO2, AGO3 and AGO4. Interacts with PABPC1 and EIF4G1. Interacts with CNOT1; the interaction is direct and mediates the association with the CCR4-NOT complex. Interacts with PAN3; the interaction mediates the association with the PAN complex.

In terms of biological role, plays a role in RNA-mediated gene silencing by micro-RNAs (miRNAs). Required for miRNA-dependent translational repression of complementary mRNAs by argonaute family proteins. As scaffoldng protein associates with argonaute proteins bound to partially complementary mRNAs and simultaneously can recruit CCR4-NOT and PAN deadenylase complexes. The sequence is that of Trinucleotide repeat-containing gene 6C protein (TNRC6C) from Homo sapiens (Human).